Reading from the N-terminus, the 470-residue chain is 3-isopropylmalate dehydratase large subunit (470 aa).

3 residues coordinate [4Fe-4S] cluster: cysteine 351, cysteine 411, and cysteine 414.

The protein belongs to the aconitase/IPM isomerase family. LeuC type 1 subfamily. As to quaternary structure, heterodimer of LeuC and LeuD. The cofactor is [4Fe-4S] cluster.

It catalyses the reaction (2R,3S)-3-isopropylmalate = (2S)-2-isopropylmalate. Its pathway is amino-acid biosynthesis; L-leucine biosynthesis; L-leucine from 3-methyl-2-oxobutanoate: step 2/4. Functionally, catalyzes the isomerization between 2-isopropylmalate and 3-isopropylmalate, via the formation of 2-isopropylmaleate. This Rhodopseudomonas palustris (strain BisB5) protein is 3-isopropylmalate dehydratase large subunit.